The sequence spans 624 residues: Chaperone protein HtpG (624 aa).

Residues 1 to 336 (MKGQETRGFQ…SNDLPLNVSR (336 aa)) are a; substrate-binding. Positions 337-552 (EILQDSTVTR…ADEMSTQMAK (216 aa)) are b. The segment at 553–624 (LFAAAGQSVP…IRRMNQLLVS (72 aa)) is c.

This sequence belongs to the heat shock protein 90 family. In terms of assembly, homodimer.

The protein localises to the cytoplasm. Functionally, molecular chaperone. Has ATPase activity. The protein is Chaperone protein HtpG of Salmonella paratyphi A (strain ATCC 9150 / SARB42).